We begin with the raw amino-acid sequence, 86 residues long: uncharacterized protein (86 aa).

It to M.jannaschii MJ0526.1.

This is an uncharacterized protein from Methanothermobacter thermautotrophicus (strain ATCC 29096 / DSM 1053 / JCM 10044 / NBRC 100330 / Delta H) (Methanobacterium thermoautotrophicum).